A 178-amino-acid chain; its full sequence is ATP synthase subunit delta (178 aa).

It belongs to the ATPase delta chain family. In terms of assembly, F-type ATPases have 2 components, F(1) - the catalytic core - and F(0) - the membrane proton channel. F(1) has five subunits: alpha(3), beta(3), gamma(1), delta(1), epsilon(1). F(0) has three main subunits: a(1), b(2) and c(10-14). The alpha and beta chains form an alternating ring which encloses part of the gamma chain. F(1) is attached to F(0) by a central stalk formed by the gamma and epsilon chains, while a peripheral stalk is formed by the delta and b chains.

The protein resides in the cell membrane. Functionally, f(1)F(0) ATP synthase produces ATP from ADP in the presence of a proton or sodium gradient. F-type ATPases consist of two structural domains, F(1) containing the extramembraneous catalytic core and F(0) containing the membrane proton channel, linked together by a central stalk and a peripheral stalk. During catalysis, ATP synthesis in the catalytic domain of F(1) is coupled via a rotary mechanism of the central stalk subunits to proton translocation. In terms of biological role, this protein is part of the stalk that links CF(0) to CF(1). It either transmits conformational changes from CF(0) to CF(1) or is implicated in proton conduction. The sequence is that of ATP synthase subunit delta from Streptococcus agalactiae serotype V (strain ATCC BAA-611 / 2603 V/R).